The chain runs to 384 residues: Toluene efflux pump periplasmic linker protein TtgA (384 aa).

An N-terminal signal peptide occupies residues 1–22; that stretch reads MQFKPAVTALVSAVALATLLSG. Residue Cys-23 is the site of N-palmitoyl cysteine attachment. Cys-23 is lipidated: S-diacylglycerol cysteine. A coiled-coil region spans residues 115–155; it reads LAERYKQLIDEQAVSKQEYDDANAKRLQAEASLKSAQIDLR. A disordered region spans residues 362-384; the sequence is ATNVKKPAGPDQANAAKADAKAE. The span at 368–378 shows a compositional bias: low complexity; the sequence is PAGPDQANAAK.

Belongs to the membrane fusion protein (MFP) (TC 8.A.1) family.

Its subcellular location is the cell inner membrane. Its function is as follows. The periplasmic linker protein component of a constitutive organic solvent efflux system. Involved in export of toluene, styrene, m-xylene, propylbenzene and ethylbenzene. Also exports AMP and the antibiotics carbenicillin, nalidixic acid, chloramphenicol and tetracycline. The protein is Toluene efflux pump periplasmic linker protein TtgA (ttgA) of Pseudomonas putida (strain DOT-T1E).